The sequence spans 152 residues: Mid1-interacting protein 1A (152 aa).

Residues S87–E105 are compositionally biased toward basic and acidic residues. Residues S87 to D109 form a disordered region.

The protein belongs to the SPOT14 family. As to expression, expressed for a short period in the cells that will produce the enveloping layer (EVL).

The protein localises to the nucleus. Its subcellular location is the cytoplasm. It localises to the cytoskeleton. In terms of biological role, involved in stabilization of microtubules. May play a role in the regulation of lipogenesis. The sequence is that of Mid1-interacting protein 1A (mid1ip1a) from Danio rerio (Zebrafish).